We begin with the raw amino-acid sequence, 286 residues long: Neuferricin homolog (286 aa).

Positions 1 to 23 (MFGFVKYLFKLQFLFILAAVLAG) are cleaved as a signal peptide. A Cytochrome b5 heme-binding domain is found at 61 to 145 (ATVLTSAELS…KPNDLLGLAN (85 aa)). A coiled-coil region spans residues 176–200 (HKYLALLEQAQIAKAEVDELRSKYP).

The protein belongs to the cytochrome b5 family. MAPR subfamily.

It is found in the secreted. In terms of biological role, heme-binding protein. This Drosophila pseudoobscura pseudoobscura (Fruit fly) protein is Neuferricin homolog.